The following is a 737-amino-acid chain: Probable beta-glucosidase L (737 aa).

Residues 1-19 (MRSLIRSGALNAFLAASLA) form the signal peptide. A glycan (N-linked (GlcNAc...) asparagine) is linked at Asn225. Asp253 is an active-site residue. Residues Asn340, Asn365, and Asn608 are each glycosylated (N-linked (GlcNAc...) asparagine).

The protein belongs to the glycosyl hydrolase 3 family.

The protein resides in the secreted. It carries out the reaction Hydrolysis of terminal, non-reducing beta-D-glucosyl residues with release of beta-D-glucose.. Its pathway is glycan metabolism; cellulose degradation. In terms of biological role, beta-glucosidases are one of a number of cellulolytic enzymes involved in the degradation of cellulosic biomass. Catalyzes the last step releasing glucose from the inhibitory cellobiose. The sequence is that of Probable beta-glucosidase L (bglL) from Emericella nidulans (strain FGSC A4 / ATCC 38163 / CBS 112.46 / NRRL 194 / M139) (Aspergillus nidulans).